A 661-amino-acid polypeptide reads, in one-letter code: FAST kinase domain-containing protein 3, mitochondrial (661 aa).

Residues 592–650 enclose the RAP domain; sequence VALCIDGPQRFCLDSKHLLGKEATKQRHLRLLGYQVVQLPYHELELLTSRLELVDYLQR.

The protein belongs to the FAST kinase family. In terms of tissue distribution, expression detected in spleen, testis, colon, heart, smooth muscle, kidney, brain, lung, liver, brown and white adipose tissue with highest expression in testis and smooth muscle.

The protein localises to the mitochondrion. Its function is as follows. Required for normal mitochondrial respiration. Increases steady-state levels and half-lives of a subset of mature mitochondrial mRNAs MT-ND2, MT-ND3, MT-CYTB, MT-CO2, and MT-ATP8/6. Promotes MT-CO1 mRNA translation and increases mitochondrial complex IV assembly and activity. The sequence is that of FAST kinase domain-containing protein 3, mitochondrial (Fastkd3) from Mus musculus (Mouse).